The chain runs to 532 residues: Membrane protein insertase YidC (532 aa).

5 consecutive transmembrane segments (helical) span residues 7–27 (FFIFAFLFVSFLLWQAWQSQM), 336–356 (LTILYSIIGNWGFSIILITFI), 413–433 (GGFLPIFIQMPIFLSLYYMLI), 450–470 (LSSQDPYYVLPVIMGLTMFFI), and 492–512 (PVIFTAFFLWFPSGLVLYYII).

Belongs to the OXA1/ALB3/YidC family. Type 1 subfamily. Interacts with the Sec translocase complex via SecD. Specifically interacts with transmembrane segments of nascent integral membrane proteins during membrane integration.

The protein resides in the cell membrane. Functionally, required for the insertion and/or proper folding and/or complex formation of integral membrane proteins into the membrane. Involved in integration of membrane proteins that insert both dependently and independently of the Sec translocase complex, as well as at least some lipoproteins. Aids folding of multispanning membrane proteins. The protein is Membrane protein insertase YidC of Buchnera aphidicola subsp. Acyrthosiphon pisum (strain 5A).